Here is a 482-residue protein sequence, read N- to C-terminus: C3a anaphylatoxin chemotactic receptor (482 aa).

The Extracellular portion of the chain corresponds to 1 to 23 (MASFSAETNSTDLLSQPWNEPPV). N-linked (GlcNAc...) asparagine glycosylation occurs at Asn9. Residues 24-46 (ILSMVILSLTFLLGLPGNGLVLW) form a helical membrane-spanning segment. The Cytoplasmic portion of the chain corresponds to 47–57 (VAGLKMQRTVN). The chain crosses the membrane as a helical span at residues 58–80 (TVWFLHLTLADLLCCLSLPFSLA). Topologically, residues 81 to 96 (HLALQGQWPYGRFLCE) are extracellular. An intrachain disulfide couples Cys95 to Cys172. Residues 97–118 (LIPSIIVLNMFASVFLLTAISL) traverse the membrane as a helical segment. Topologically, residues 119 to 139 (DRCLVVFKPIWCQNHRNVGTA) are cytoplasmic. The chain crosses the membrane as a helical span at residues 140-160 (CSICGCIWVVAFVMCIPVFVY). Topologically, residues 161–340 (REIFTADNHN…TPLVAITITR (180 aa)) are extracellular. Sulfotyrosine occurs at positions 174 and 184. The N-linked (GlcNAc...) asparagine glycan is linked to Asn194. Tyr318 is subject to Sulfotyrosine. The chain crosses the membrane as a helical span at residues 341 to 360 (LVVGFLLPSVIMIACYSFIV). The Cytoplasmic segment spans residues 361–377 (FRMQRGRFAKSQSKTFR). Residues 378 to 400 (VAVVVVAVFLVCWTPYHIFGVLS) form a helical membrane-spanning segment. Residues 401-417 (LLIDPESPLGKTLMSWD) lie on the Extracellular side of the membrane. A helical membrane pass occupies residues 418–438 (HVSIALASANSCFNPFLYALL). At 439–482 (GKDFRKKARQSIQGILEAAFSEELTRSTHCNSNNVFSERNSTTV) the chain is on the cytoplasmic side. Ser459 carries the post-translational modification Phosphoserine. Phosphothreonine is present on Thr463.

It belongs to the G-protein coupled receptor 1 family. As to quaternary structure, interacts with VGF-derived peptide TLQP-21. Post-translationally, among the sulfation sites Tyr-174 is essential for binding of C3a anaphylatoxin.

The protein resides in the cell membrane. In terms of biological role, receptor for the chemotactic and inflammatory peptide anaphylatoxin C3a. This receptor stimulates chemotaxis, granule enzyme release and superoxide anion production. This Pongo abelii (Sumatran orangutan) protein is C3a anaphylatoxin chemotactic receptor (C3AR1).